The sequence spans 752 residues: DNA topoisomerase 4 subunit A (752 aa).

The Topo IIA-type catalytic domain maps to 31 to 494 (LPFIGDGLKP…EAKAMSEHDM (464 aa)). Tyrosine 120 functions as the O-(5'-phospho-DNA)-tyrosine intermediate in the catalytic mechanism. The disordered stretch occupies residues 472-492 (YGDDRRSPLREREEAKAMSEH). Residues 473 to 492 (GDDRRSPLREREEAKAMSEH) are compositionally biased toward basic and acidic residues.

Belongs to the type II topoisomerase GyrA/ParC subunit family. ParC type 1 subfamily. In terms of assembly, heterotetramer composed of ParC and ParE.

It is found in the cell membrane. It catalyses the reaction ATP-dependent breakage, passage and rejoining of double-stranded DNA.. Functionally, topoisomerase IV is essential for chromosome segregation. It relaxes supercoiled DNA. Performs the decatenation events required during the replication of a circular DNA molecule. This Salmonella typhimurium (strain LT2 / SGSC1412 / ATCC 700720) protein is DNA topoisomerase 4 subunit A.